Consider the following 552-residue polypeptide: Membrane protein insertase YidC (552 aa).

A helical membrane pass occupies residues 3–23; sequence IKRTVLWVIFFMSAVMLFDNW. The interval 35 to 59 is disordered; sequence PSATPTKTVGSAAPGTTTPGTQPAD. Low complexity predominate over residues 42–59; that stretch reads TVGSAAPGTTTPGTQPAD. Transmembrane regions (helical) follow at residues 364 to 384, 430 to 450, and 504 to 524; these read WGWS…PLSA, FGGC…YWVL, and MMFM…GLVL.

The protein belongs to the OXA1/ALB3/YidC family. Type 1 subfamily. Interacts with the Sec translocase complex via SecD. Specifically interacts with transmembrane segments of nascent integral membrane proteins during membrane integration.

The protein localises to the cell inner membrane. In terms of biological role, required for the insertion and/or proper folding and/or complex formation of integral membrane proteins into the membrane. Involved in integration of membrane proteins that insert both dependently and independently of the Sec translocase complex, as well as at least some lipoproteins. Aids folding of multispanning membrane proteins. The sequence is that of Membrane protein insertase YidC from Paraburkholderia phytofirmans (strain DSM 17436 / LMG 22146 / PsJN) (Burkholderia phytofirmans).